The primary structure comprises 564 residues: Sulfite reductase [NADPH] hemoprotein beta-component 2 (564 aa).

Cys-426, Cys-432, Cys-471, and Cys-475 together coordinate [4Fe-4S] cluster. Residue Cys-475 participates in siroheme binding.

Belongs to the nitrite and sulfite reductase 4Fe-4S domain family. As to quaternary structure, alpha(8)-beta(8). The alpha component is a flavoprotein, the beta component is a hemoprotein. Siroheme is required as a cofactor. It depends on [4Fe-4S] cluster as a cofactor.

The catalysed reaction is hydrogen sulfide + 3 NADP(+) + 3 H2O = sulfite + 3 NADPH + 4 H(+). It participates in sulfur metabolism; hydrogen sulfide biosynthesis; hydrogen sulfide from sulfite (NADPH route): step 1/1. Functionally, component of the sulfite reductase complex that catalyzes the 6-electron reduction of sulfite to sulfide. This is one of several activities required for the biosynthesis of L-cysteine from sulfate. This Klebsiella pneumoniae (strain 342) protein is Sulfite reductase [NADPH] hemoprotein beta-component 2.